We begin with the raw amino-acid sequence, 503 residues long: Lysine--tRNA ligase (503 aa).

Residues E413 and E420 each coordinate Mg(2+).

This sequence belongs to the class-II aminoacyl-tRNA synthetase family. Homodimer. Mg(2+) serves as cofactor.

The protein localises to the cytoplasm. The catalysed reaction is tRNA(Lys) + L-lysine + ATP = L-lysyl-tRNA(Lys) + AMP + diphosphate. In Actinobacillus succinogenes (strain ATCC 55618 / DSM 22257 / CCUG 43843 / 130Z), this protein is Lysine--tRNA ligase.